Here is a 129-residue protein sequence, read N- to C-terminus: MAFAFPDSFRFADSHEYANADGELVRVGISAFAVDQLGDIVFVDLPDVGASLAKGTSFGSVESVKAVEDMYAPIAGEVVQRNEAVLASPEELQNDPHGEGWLLVLRPSDPAELDSLMTAEAYGAKVNAG.

One can recognise a Lipoyl-binding domain in the interval 24-106 (LVRVGISAFA…HGEGWLLVLR (83 aa)). Residue Lys-65 is modified to N6-lipoyllysine.

It belongs to the GcvH family. The glycine cleavage system is composed of four proteins: P, T, L and H. (R)-lipoate serves as cofactor.

Its function is as follows. The glycine cleavage system catalyzes the degradation of glycine. The H protein shuttles the methylamine group of glycine from the P protein to the T protein. This is Glycine cleavage system H protein from Synechococcus sp. (strain CC9605).